The primary structure comprises 573 residues: Methionine--tRNA ligase (573 aa).

Positions 11 to 21 match the 'HIGH' region motif; that stretch reads PYINGIKHLGN. The Zn(2+) site is built by Cys143, Cys146, Cys156, and Cys159. Residues 346 to 350 carry the 'KMSKS' region motif; sequence QFSTS. Thr349 is an ATP binding site.

This sequence belongs to the class-I aminoacyl-tRNA synthetase family. MetG type 1 subfamily. As to quaternary structure, monomer. Zn(2+) is required as a cofactor.

It is found in the cytoplasm. The enzyme catalyses tRNA(Met) + L-methionine + ATP = L-methionyl-tRNA(Met) + AMP + diphosphate. Its function is as follows. Is required not only for elongation of protein synthesis but also for the initiation of all mRNA translation through initiator tRNA(fMet) aminoacylation. This chain is Methionine--tRNA ligase, found in Ruegeria sp. (strain TM1040) (Silicibacter sp.).